The chain runs to 107 residues: Putative nucleosome assembly protein 1-like 6 (107 aa).

The protein belongs to the nucleosome assembly protein (NAP) family.

This is Putative nucleosome assembly protein 1-like 6 from Homo sapiens (Human).